Consider the following 437-residue polypeptide: MEVKVLSSKLVKPAYNGGVAAAPDVEYIPLSIFDKVTYKMQMAIIYAFPPPAPSTAAIEKGLAAVLAQYRAFAGQLGESPDGEAAVVLNDRGARLVEAAVDADLVDMAPAKPTPELLRLHPDLEGELQEVVLLQLTRFRCGSLAVGFTSNHVVADGHATSNFLVAWGRATRGLPMGAPPVHHHAALFKPRPSPHVEHDHRNREYYLPAAGDDSHGHGDGGAADNIVIHKAHFTKDFIAGLRAAASEGRGRPFSRFETILAHLWRTMTRARGLSPDEASTIRLSVDGRHRLGAPAEYFGNLVLWAFPRATVGDLLTRPLKHAAQVIHDEVARVDGAYFRSFLDFALSGAGGDKEGLAPSAVLKDVLCPNAEVDSWLTFPFYELDFGTGSPTYFMPSYFPTEGMLFLVPSYLGDGSVDAFVPVFNHNLEAFKECCYSME.

Residues H151 and D383 each act as proton acceptor in the active site.

This sequence belongs to the plant acyltransferase family. In terms of tissue distribution, highly expressed in roots. Expressed at low levels in shoots and flowers.

In terms of biological role, hydroxycinnamoyl transferase that catalyzes the transfer of an acyl from p-coumaryol-CoA to putrescine, to produce coumaroyl putrescine. Can use feruloyl-CoA and caffeoyl-CoA as acyl donors. The polypeptide is Putrescine hydroxycinnamoyltransferase 3 (Oryza sativa subsp. japonica (Rice)).